The following is a 111-amino-acid chain: Fertilization-influencing membrane protein (111 aa).

The first 23 residues, 1–23 (MKLWLWVAVGVWMLMAELGTIET), serve as a signal peptide directing secretion. A helical membrane pass occupies residues 85–105 (ILVGTLVVAFFFLLFQFCLHV).

As to expression, testis-specific.

It is found in the cell membrane. The protein resides in the secreted. Functionally, plays a role in sperm-oocyte fusion process during fertilization. The sequence is that of Fertilization-influencing membrane protein from Mus musculus (Mouse).